Reading from the N-terminus, the 1050-residue chain is Isoleucine--tRNA ligase (1050 aa).

Positions 45–56 (PYPSSPIPHIGT) match the 'HIGH' region motif. Positions 594–598 (EMHKS) match the 'KMSKS' region motif. Residue K597 participates in ATP binding.

The protein belongs to the class-I aminoacyl-tRNA synthetase family. IleS type 2 subfamily. In terms of assembly, monomer. Requires Zn(2+) as cofactor.

It localises to the cytoplasm. It catalyses the reaction tRNA(Ile) + L-isoleucine + ATP = L-isoleucyl-tRNA(Ile) + AMP + diphosphate. Functionally, catalyzes the attachment of isoleucine to tRNA(Ile). As IleRS can inadvertently accommodate and process structurally similar amino acids such as valine, to avoid such errors it has two additional distinct tRNA(Ile)-dependent editing activities. One activity is designated as 'pretransfer' editing and involves the hydrolysis of activated Val-AMP. The other activity is designated 'posttransfer' editing and involves deacylation of mischarged Val-tRNA(Ile). The sequence is that of Isoleucine--tRNA ligase from Sulfolobus acidocaldarius (strain ATCC 33909 / DSM 639 / JCM 8929 / NBRC 15157 / NCIMB 11770).